We begin with the raw amino-acid sequence, 229 residues long: ATP synthase subunit a (229 aa).

A run of 6 helical transmembrane segments spans residues 16–36, 81–101, 110–130, 142–162, 175–195, and 196–216; these read YAHV…GAAA, YIPF…LGMI, NMNT…FQGV, FMGP…VSHI, VMMG…IGVP, and IPFY…FTLL.

The protein belongs to the ATPase A chain family. F-type ATPases have 2 components, CF(1) - the catalytic core - and CF(0) - the membrane proton channel. CF(1) has five subunits: alpha(3), beta(3), gamma(1), delta(1), epsilon(1). CF(0) has three main subunits: a(1), b(2) and c(9-12). The alpha and beta chains form an alternating ring which encloses part of the gamma chain. CF(1) is attached to CF(0) by a central stalk formed by the gamma and epsilon chains, while a peripheral stalk is formed by the delta and b chains.

It localises to the cell inner membrane. Its function is as follows. Key component of the proton channel; it plays a direct role in the translocation of protons across the membrane. This Bdellovibrio bacteriovorus (strain ATCC 15356 / DSM 50701 / NCIMB 9529 / HD100) protein is ATP synthase subunit a.